Here is a 294-residue protein sequence, read N- to C-terminus: ATP phosphoribosyltransferase (294 aa).

Belongs to the ATP phosphoribosyltransferase family. Long subfamily. The cofactor is Mg(2+).

It localises to the cytoplasm. It carries out the reaction 1-(5-phospho-beta-D-ribosyl)-ATP + diphosphate = 5-phospho-alpha-D-ribose 1-diphosphate + ATP. The protein operates within amino-acid biosynthesis; L-histidine biosynthesis; L-histidine from 5-phospho-alpha-D-ribose 1-diphosphate: step 1/9. With respect to regulation, feedback inhibited by histidine. In terms of biological role, catalyzes the condensation of ATP and 5-phosphoribose 1-diphosphate to form N'-(5'-phosphoribosyl)-ATP (PR-ATP). Has a crucial role in the pathway because the rate of histidine biosynthesis seems to be controlled primarily by regulation of HisG enzymatic activity. The chain is ATP phosphoribosyltransferase from Chlorobaculum parvum (strain DSM 263 / NCIMB 8327) (Chlorobium vibrioforme subsp. thiosulfatophilum).